The following is a 239-amino-acid chain: Uridylate kinase (239 aa).

12 to 15 contacts ATP; it reads KLSG. Gly54 provides a ligand contact to UMP. Gly55 and Arg59 together coordinate ATP. UMP-binding positions include Asp74 and 135–142; that span reads TGNPYFTT. Residues Thr162, Tyr168, and Asp171 each coordinate ATP.

The protein belongs to the UMP kinase family. As to quaternary structure, homohexamer.

It localises to the cytoplasm. It catalyses the reaction UMP + ATP = UDP + ADP. It functions in the pathway pyrimidine metabolism; CTP biosynthesis via de novo pathway; UDP from UMP (UMPK route): step 1/1. Its activity is regulated as follows. Inhibited by UTP. Catalyzes the reversible phosphorylation of UMP to UDP. This chain is Uridylate kinase, found in Fusobacterium nucleatum subsp. nucleatum (strain ATCC 25586 / DSM 15643 / BCRC 10681 / CIP 101130 / JCM 8532 / KCTC 2640 / LMG 13131 / VPI 4355).